The primary structure comprises 618 residues: Alpha-dioxygenase PIOX (618 aa).

The Proton acceptor role is filled by His157. Asp158 is a binding site for Ca(2+). His162 serves as a coordination point for heme b. The Ca(2+) site is built by Thr210, Trp212, Asp214, and Ser216. A hexadecanoate-binding site is contributed by His311. Residues His382, Arg479, and Arg483 each contribute to the heme b site. Glu599 provides a ligand contact to hexadecanoate.

Belongs to the peroxidase family. Heme b serves as cofactor. Requires Ca(2+) as cofactor.

The catalysed reaction is a 1,2-saturated fatty acid + O2 = a (2R)-2-hydroperoxy fatty acid. It catalyses the reaction (9Z,12Z)-octadecadienoate + O2 = (2R,9Z,12Z)-2-hydroperoxyoctadecadienoate. The enzyme catalyses hexadecanoate + O2 = (2R)-2-hydroperoxyhexadecanoate. It carries out the reaction (9Z,12Z,15Z)-octadecatrienoate + O2 = (R)-2-hydroperoxy-(9Z,12Z,15Z)-octadecatrienoate. The catalysed reaction is tetradecanoate + O2 = (2R)-2-hydroperoxytetradecanoate. It catalyses the reaction octadecanoate + O2 = (2R)-2-hydroperoxyoctadecanoate. The enzyme catalyses (9Z)-octadecenoate + O2 = (2R,9Z)-2-hydroperoxyoctadecenoate. In terms of biological role, alpha-dioxygenase that catalyzes the primary oxygenation step of a variety of 14-20 carbon fatty acids, containing up to three unsaturated bonds, into their corresponding 2R-hydroperoxides. Involved in the production of oxylipins that function in cell signaling, wound healing, and protection from infection. In Oryza sativa subsp. japonica (Rice), this protein is Alpha-dioxygenase PIOX.